We begin with the raw amino-acid sequence, 376 residues long: MQCALYDAGRCRSCQWIVQPIRDQLSAKTADLKGLLADFSVEQWCAPVSGPEQAFRNKAKMVVSGSVEKPLLGMLHRDGTPEDLSDCPLYPDTFAPVFATLKPFIARAGLTPYNVARKRGELKYILLTESQFDGGMMLRFVLRSETKLAQLRAALPWLQAQLPQLKVITANIQPVHMAIMEGETEIFLTEQQALAERFNDVPLWIRPQSFFQTNPVVASHLYATARDWVRQLPVHHMWDLFCGVGGFGLHCATPEMTLTGIEIAPEAIACAKQSAAELGLTNLHFQALDSTQFATGQGEVPELVLVNPPRRGIGKALCDYLSQMAPEYIIYSSCNAQTMAKDIANLPGYRIERVQLFDMFPHTAHYEVLTLLTKTR.

[4Fe-4S] cluster-binding residues include C3, C11, C14, and C87. Positions 212, 241, 262, and 307 each coordinate S-adenosyl-L-methionine. C334 acts as the Nucleophile in catalysis.

The protein belongs to the class I-like SAM-binding methyltransferase superfamily. RNA M5U methyltransferase family. RlmC subfamily.

It carries out the reaction uridine(747) in 23S rRNA + S-adenosyl-L-methionine = 5-methyluridine(747) in 23S rRNA + S-adenosyl-L-homocysteine + H(+). In terms of biological role, catalyzes the formation of 5-methyl-uridine at position 747 (m5U747) in 23S rRNA. This Citrobacter koseri (strain ATCC BAA-895 / CDC 4225-83 / SGSC4696) protein is 23S rRNA (uracil(747)-C(5))-methyltransferase RlmC.